A 462-amino-acid chain; its full sequence is A-type ATP synthase subunit B (462 aa).

This sequence belongs to the ATPase alpha/beta chains family. Has multiple subunits with at least A(3), B(3), C, D, E, F, H, I and proteolipid K(x).

The protein localises to the cell membrane. In terms of biological role, component of the A-type ATP synthase that produces ATP from ADP in the presence of a proton gradient across the membrane. The B chain is a regulatory subunit. This chain is A-type ATP synthase subunit B, found in Methanococcus maripaludis (strain C5 / ATCC BAA-1333).